The following is a 527-amino-acid chain: MMQKIQRFGSAMFVPVLLFAFAGIIVGISTLFKNKTLMGPLADPDGFWYQCWYIIEQGGWTVFNQMPLLFAIGIPVALAKKAQARACLEALTVYLTFNYFVSAILTVWGGAFGVDMNQEVGGTSGLTMIAGIKTLDTNIIGAIFISSIVVFLHNRYFDKKLPDFLGIFQGSTYIVMISFFIMIPIALAVSYIWPMVQSGIGSLQSFLVASGAVGVWIYTFLERILIPTGLHHFIYTPFIYGPAVAEGGIVTYWAQHLGEYSQSAKPLKELFPQGGFALHGNSKIFGIPGIALAFYVTAKKEKKKLVAGLLIPVTLTAIVAGITEPIEFTFLFISPFLFAVHAVLAATMSTVMYMAGVVGNMGGGLIEAVTLNWIPLFGSHGMTYVYQILIGLSFTAIYFFVFRFLILKFNIATPGREKDEQQETKLYSKKEYRERKNKDETASAAETADDTAFLYIEALGGKDNITEVTNCATRLRVSVKDETKVEPDSVFRALGAHGVVRNGKAFQVIIGLSVPQMRERVEKILNQ.

Positions 1–418 (MMQKIQRFGS…FNIATPGREK (418 aa)) constitute a PTS EIIC type-1 domain. 12 consecutive transmembrane segments (helical) span residues 8 to 28 (FGSA…IVGI), 59 to 79 (GWTV…VALA), 93 to 113 (VYLT…GAFG), 132 to 152 (IKTL…VVFL), 173 to 193 (YIVM…SYIW), 200 to 220 (IGSL…IYTF), 224 to 244 (ILIP…GPAV), 276 to 296 (FALH…AFYV), 305 to 325 (LVAG…ITEP), 326 to 346 (IEFT…VLAA), 357 to 377 (VVGN…IPLF), and 382 to 402 (MTYV…FFVF). Residues 449 to 527 (DDTAFLYIEA…RERVEKILNQ (79 aa)) form the PTS EIIB type-1 domain. C471 acts as the Phosphocysteine intermediate; for EIIB activity in catalysis.

Its subcellular location is the cell membrane. It catalyses the reaction D-maltose(out) + N(pros)-phospho-L-histidyl-[protein] = alpha-maltose 6'-phosphate(in) + L-histidyl-[protein]. Functionally, the phosphoenolpyruvate-dependent sugar phosphotransferase system (sugar PTS), a major carbohydrate active transport system, catalyzes the phosphorylation of incoming sugar substrates concomitantly with their translocation across the cell membrane. This system is involved in maltose transport. The polypeptide is PTS system maltose-specific EIICB component (Bacillus subtilis (strain 168)).